Consider the following 197-residue polypeptide: MANHLLEEMVDALSSLPGIGRKSAFRISFHLLRLEQGHFNHFIHQLTNTKNKIKFCKRCGSYAETEICNICTSEKRDTHTFCVVEQPEDIFFIENTREFHGKYHVLNGVISPLEGIGPKDLRIKELLERIEPEQIKEVLVATNPTLEGDATADYLASQLKPLSVDVTRIAYGITVGGSIELADQYTLGRAIRSRLQL.

The segment at 56–71 adopts a C4-type zinc-finger fold; sequence CKRCGSYAETEICNIC. Positions 79–174 constitute a Toprim domain; the sequence is HTFCVVEQPE…DVTRIAYGIT (96 aa).

It belongs to the RecR family.

Functionally, may play a role in DNA repair. It seems to be involved in an RecBC-independent recombinational process of DNA repair. It may act with RecF and RecO. The protein is Recombination protein RecR of Leptospira borgpetersenii serovar Hardjo-bovis (strain JB197).